A 351-amino-acid polypeptide reads, in one-letter code: NADP-dependent isopropanol dehydrogenase (351 aa).

The Zn(2+) site is built by Cys-37, His-59, Glu-60, and Asp-150. Residues 175–178 (IGAV), 198–200 (GSR), Tyr-218, 265–267 (INY), and Lys-340 each bind NADP(+).

This sequence belongs to the zinc-containing alcohol dehydrogenase family. Homotetramer. It depends on Zn(2+) as a cofactor.

It carries out the reaction propan-2-ol + NADP(+) = acetone + NADPH + H(+). Its function is as follows. Alcohol dehydrogenase with a preference for medium chain secondary alcohols, such as 2-butanol and isopropanol. Has very low activity with primary alcohols, such as ethanol. Under physiological conditions, the enzyme reduces aldehydes and 2-ketones to produce secondary alcohols. Is active with acetaldehyde and propionaldehyde. The polypeptide is NADP-dependent isopropanol dehydrogenase (adh) (Clostridium beijerinckii (Clostridium MP)).